Consider the following 127-residue polypeptide: Adult-specific rigid cuticular protein 12.6 (127 aa).

The Chitin-binding type R&amp;R domain maps to 9–87 (GPAYNFGYNT…ALAALAPKAP (79 aa)).

Component of the rigid cuticle of the spider. The protein is Adult-specific rigid cuticular protein 12.6 of Araneus diadematus (European garden spider).